The chain runs to 286 residues: Prepilin leader peptidase/N-methyltransferase (286 aa).

A helical transmembrane segment spans residues 10-30; it reads FAVPLAAVLGLLVGSFLNVVI. Zn(2+) contacts are provided by Cys-70, Cys-73, Cys-95, and Cys-98. Transmembrane regions (helical) follow at residues 102-122, 126-146, 157-177, 181-201, 224-244, and 250-270; these read ISIR…LVAW, WSWI…LTFI, MTLP…FVPL, VLGA…YKLL, ISAL…AAIV, and GRHF…FTAN.

The protein belongs to the peptidase A24 family. Requires Zn(2+) as cofactor.

The protein resides in the cell inner membrane. It catalyses the reaction Typically cleaves a -Gly-|-Phe- bond to release an N-terminal, basic peptide of 5-8 residues from type IV prepilin, and then N-methylates the new N-terminal amino group, the methyl donor being S-adenosyl-L-methionine.. Its function is as follows. Plays an essential role in type IV pili and type II pseudopili formation by proteolytically removing the leader sequence from substrate proteins and subsequently monomethylating the alpha-amino group of the newly exposed N-terminal phenylalanine. The chain is Prepilin leader peptidase/N-methyltransferase (pilD) from Neisseria gonorrhoeae.